A 78-amino-acid chain; its full sequence is Small ribosomal subunit protein bS18 (78 aa).

The protein belongs to the bacterial ribosomal protein bS18 family. As to quaternary structure, part of the 30S ribosomal subunit. Forms a tight heterodimer with protein bS6.

Functionally, binds as a heterodimer with protein bS6 to the central domain of the 16S rRNA, where it helps stabilize the platform of the 30S subunit. This chain is Small ribosomal subunit protein bS18, found in Geobacillus sp. (strain WCH70).